The following is a 121-amino-acid chain: Protein MGF 110-5L (121 aa).

Positions 1-20 are cleaved as a signal peptide; sequence MLVIFLGILGLLANQVSSQL. Asparagine 62 and asparagine 116 each carry an N-linked (GlcNAc...) asparagine; by host glycan.

Belongs to the asfivirus MGF 110 family.

This is Protein MGF 110-5L from African swine fever virus (isolate Portugal/Lis 57/1957) (ASFV).